We begin with the raw amino-acid sequence, 741 residues long: Catalase-peroxidase 2 (741 aa).

Residues Met1 to Ala28 form the signal peptide. The segment at residues Trp107–Tyr228 is a cross-link (tryptophyl-tyrosyl-methioninium (Trp-Tyr) (with M-254)). The Proton acceptor role is filled by His108. The tryptophyl-tyrosyl-methioninium (Tyr-Met) (with W-107) cross-link spans Tyr228–Met254. His269 provides a ligand contact to heme b.

The protein belongs to the peroxidase family. Peroxidase/catalase subfamily. As to quaternary structure, homodimer or homotetramer. It depends on heme b as a cofactor. Post-translationally, formation of the three residue Trp-Tyr-Met cross-link is important for the catalase, but not the peroxidase activity of the enzyme.

The enzyme catalyses H2O2 + AH2 = A + 2 H2O. It catalyses the reaction 2 H2O2 = O2 + 2 H2O. Its function is as follows. Bifunctional enzyme with both catalase and broad-spectrum peroxidase activity. This Burkholderia vietnamiensis (strain G4 / LMG 22486) (Burkholderia cepacia (strain R1808)) protein is Catalase-peroxidase 2.